A 228-amino-acid chain; its full sequence is Carboxy-S-adenosyl-L-methionine synthase (228 aa).

Residues Tyr-30, 55–57 (GSS), 79–80 (DN), and 103–104 (DV) each bind S-adenosyl-L-methionine.

The protein belongs to the class I-like SAM-binding methyltransferase superfamily. Cx-SAM synthase family.

The catalysed reaction is prephenate + S-adenosyl-L-methionine = carboxy-S-adenosyl-L-methionine + 3-phenylpyruvate + H2O. Its function is as follows. Catalyzes the conversion of S-adenosyl-L-methionine (SAM) to carboxy-S-adenosyl-L-methionine (Cx-SAM). The chain is Carboxy-S-adenosyl-L-methionine synthase from Staphylococcus epidermidis (strain ATCC 35984 / DSM 28319 / BCRC 17069 / CCUG 31568 / BM 3577 / RP62A).